The sequence spans 179 residues: Large ribosomal subunit protein uL6 (179 aa).

This sequence belongs to the universal ribosomal protein uL6 family. Part of the 50S ribosomal subunit.

Functionally, this protein binds to the 23S rRNA, and is important in its secondary structure. It is located near the subunit interface in the base of the L7/L12 stalk, and near the tRNA binding site of the peptidyltransferase center. In Mycobacterium ulcerans (strain Agy99), this protein is Large ribosomal subunit protein uL6.